Reading from the N-terminus, the 92-residue chain is Small ribosomal subunit protein bS20 (92 aa).

Residues 1–20 (MANIASAKKRARQAENNRAH) form a disordered region.

This sequence belongs to the bacterial ribosomal protein bS20 family.

In terms of biological role, binds directly to 16S ribosomal RNA. This Methylococcus capsulatus (strain ATCC 33009 / NCIMB 11132 / Bath) protein is Small ribosomal subunit protein bS20.